The sequence spans 466 residues: Histidine--tRNA ligase (466 aa).

The protein belongs to the class-II aminoacyl-tRNA synthetase family. As to quaternary structure, homodimer.

It is found in the cytoplasm. It catalyses the reaction tRNA(His) + L-histidine + ATP = L-histidyl-tRNA(His) + AMP + diphosphate + H(+). This Xylella fastidiosa (strain 9a5c) protein is Histidine--tRNA ligase (hisS).